A 468-amino-acid polypeptide reads, in one-letter code: V-type proton ATPase subunit H (468 aa).

This sequence belongs to the V-ATPase H subunit family. V-ATPase is a heteromultimeric enzyme made up of two complexes: the ATP-hydrolytic V1 complex and the proton translocation V0 complex. The V1 complex consists of three catalytic AB heterodimers that form a heterohexamer, three peripheral stalks each consisting of EG heterodimers, one central rotor including subunits D and F, and the regulatory subunits C and H. The proton translocation complex V0 consists of the proton transport subunit a, a ring of proteolipid subunits c9c'', rotary subunit d, subunits e and f, and the accessory subunits VhaAC45 and ATP6AP2.

Functionally, subunit of the V1 complex of vacuolar(H+)-ATPase (V-ATPase), a multisubunit enzyme composed of a peripheral complex (V1) that hydrolyzes ATP and a membrane integral complex (V0) that translocates protons. V-ATPase is responsible for acidifying and maintaining the pH of intracellular compartments and in some cell types, is targeted to the plasma membrane, where it is responsible for acidifying the extracellular environment. Subunit H is essential for V-ATPase activity, but not for the assembly of the complex. This is V-type proton ATPase subunit H (VhaSFD) from Drosophila melanogaster (Fruit fly).